We begin with the raw amino-acid sequence, 138 residues long: Basic phospholipase A2 homolog Ts-K49b (138 aa).

An N-terminal signal peptide occupies residues 1 to 16; the sequence is MRTLWIMAVLLVGVEG. 6 cysteine pairs are disulfide-bonded: cysteine 42–cysteine 131, cysteine 44–cysteine 60, cysteine 65–cysteine 138, cysteine 66–cysteine 104, cysteine 73–cysteine 97, and cysteine 91–cysteine 102. An important for membrane-damaging activities in eukaryotes and bacteria; heparin-binding region spans residues 121-133; it reads KKKKINLKLFCKK.

As to expression, expressed by the venom gland.

It is found in the secreted. In terms of biological role, snake venom phospholipase A2 homolog that lacks catalytic activity. It shows myotoxic and weak anticoagulant activities. A model of myotoxic mechanism has been proposed: an apo Lys49-PLA2 is activated by the entrance of a hydrophobic molecule (e.g. fatty acid) at the hydrophobic channel of the protein leading to a reorientation of a monomer. This reorientation causes a transition between 'inactive' to 'active' states, causing alignment of C-terminal and membrane-docking sites (MDoS) side-by-side and putting the membrane-disruption sites (MDiS) in the same plane, exposed to solvent and in a symmetric position for both monomers. The MDoS region stabilizes the toxin on membrane by the interaction of charged residues with phospholipid head groups. Subsequently, the MDiS region destabilizes the membrane with penetration of hydrophobic residues. This insertion causes a disorganization of the membrane, allowing an uncontrolled influx of ions (i.e. calcium and sodium), and eventually triggering irreversible intracellular alterations and cell death. The sequence is that of Basic phospholipase A2 homolog Ts-K49b from Trimeresurus stejnegeri (Chinese green tree viper).